Here is an 89-residue protein sequence, read N- to C-terminus: Dynein light chain 1, cytoplasmic (89 aa).

The protein belongs to the dynein light chain family. Interacts with mett-10; the interaction is direct, and is required for the nuclear localization of mett-10. Component of a dynein-regulating complex composed of at least bicd-1, dlc-1 and egal-1. Interacts with egal-1 and unc-83. Interacts with fbf-2. Broadly expressed in tissues including the intestine, body wall muscles, germs cells, oocytes, the rectal valve and cells in the head.

It localises to the cytoplasm. Its subcellular location is the cytoskeleton. The protein localises to the nucleus envelope. The protein resides in the cytoplasmic granule. Acts as a non-catalytic accessory component of a dynein complex. Part of a complex with bicd-1 and egal-1, which is recruited to the nuclear envelope by unc-83, where in turn, it recruits dynein to the nuclear surface and regulates nuclear migrations in hypodermal precursor cells. Probably within a dynein motor complex, plays a role in the cell fate specification of the germline and oogenesis. In particular, it inhibits germ cell proliferation. Regulates the function and localization of the RNA-binding protein fbf-2 in the germline. Plays a role in mitotic and meiotic processes. Involved in the pairing of homologous chromosomes. Independently of its dynein-mediated functions, plays a role in germ cell apoptosis. This chain is Dynein light chain 1, cytoplasmic, found in Caenorhabditis elegans.